The following is a 256-amino-acid chain: Glutamate racemase (256 aa).

Residues 11–12 (DS) and 43–44 (YG) contribute to the substrate site. The active-site Proton donor/acceptor is cysteine 74. 75-76 (NT) provides a ligand contact to substrate. Cysteine 182 serves as the catalytic Proton donor/acceptor. 183–184 (TH) provides a ligand contact to substrate.

The protein belongs to the aspartate/glutamate racemases family.

The enzyme catalyses L-glutamate = D-glutamate. The protein operates within cell wall biogenesis; peptidoglycan biosynthesis. Provides the (R)-glutamate required for cell wall biosynthesis. In Leptospira interrogans serogroup Icterohaemorrhagiae serovar copenhageni (strain Fiocruz L1-130), this protein is Glutamate racemase.